Reading from the N-terminus, the 161-residue chain is Lipoprotein signal peptidase (161 aa).

Transmembrane regions (helical) follow at residues 8 to 28 (LKYFILAILIIAADLYTKYLA), 40 to 60 (ITSFFNLTLLYNHGAAFSLLS), 67 to 87 (QMIMFSTISLIAAIVLIYLII), and 91 to 111 (ITEKINLFSFALILGGALGNF). Active-site residues include Asp122 and Asp140. A helical membrane pass occupies residues 136–156 (FNIADSAITCGVVILIAASLF).

Belongs to the peptidase A8 family.

The protein localises to the cell inner membrane. It carries out the reaction Release of signal peptides from bacterial membrane prolipoproteins. Hydrolyzes -Xaa-Yaa-Zaa-|-(S,diacylglyceryl)Cys-, in which Xaa is hydrophobic (preferably Leu), and Yaa (Ala or Ser) and Zaa (Gly or Ala) have small, neutral side chains.. Its pathway is protein modification; lipoprotein biosynthesis (signal peptide cleavage). In terms of biological role, this protein specifically catalyzes the removal of signal peptides from prolipoproteins. The polypeptide is Lipoprotein signal peptidase (Francisella tularensis subsp. novicida (strain U112)).